Reading from the N-terminus, the 158-residue chain is Respiratory supercomplex factor 1, mitochondrial (158 aa).

The region spanning 5-96 is the HIG1 domain; sequence PSSFDVEDAD…KDKYDQKKKE (92 aa). The next 2 helical transmembrane spans lie at 32–54 and 64–86; these read PLVPIGTLLTTGAVILAAQNMRI and FRWRVGLQAATLAALVAGSFIYG. Residues 99–158 are a coiled coil; it reads MKEKAKLREQLWIKELERRDAEAQDRKKKAEAARLKTKENEAAIQKLEQELKELEAKASK.

Belongs to the RCF1 family. As to quaternary structure, associates with the respiratory chain complex III/complex IV supercomplex.

The protein localises to the mitochondrion membrane. Its function is as follows. Cytochrome c oxidase subunit which plays a role in assembly of respiratory supercomplexes. In Candida glabrata (strain ATCC 2001 / BCRC 20586 / JCM 3761 / NBRC 0622 / NRRL Y-65 / CBS 138) (Yeast), this protein is Respiratory supercomplex factor 1, mitochondrial (RCF1).